Here is a 308-residue protein sequence, read N- to C-terminus: Olfactory receptor 5H8 (308 aa).

Over 1 to 28 (MDDENATLLTEFVLTGLTYQSEWKIPLF) the chain is Extracellular. Residues 29–49 (LAFLVIYLITIMANLGLIAVI) form a helical membrane-spanning segment. Residues 50-56 (WKDSHLH) are Cytoplasmic-facing. The helical transmembrane segment at 57–77 (IPMYLFLGSLAFVDAWLSSSV) threads the bilayer. The Extracellular portion of the chain corresponds to 78–98 (TPKMLISFLAKSMIISVSECK). Cys-97 and Cys-179 form a disulfide bridge. The chain crosses the membrane as a helical span at residues 99–119 (IQFFSFGISGTTECFLLATMA). Residues 120–133 (YDRYVAICKPLLYP) are Cytoplasmic-facing. Residues 134-154 (VIMTNGLCIWLLVLSFIGGFL) traverse the membrane as a helical segment. The Extracellular segment spans residues 155–195 (HALIHEGILFRLTFCNSNIIHHFYCDIIPLLKISCTDPSIN). The helical transmembrane segment at 196-216 (FLMLFILSGSIQVFTILTVLV) threads the bilayer. Residues 217–238 (SYTFVLFTILKKKAKDIRKAFS) lie on the Cytoplasmic side of the membrane. Residues 239–259 (TCGAHLLSVSLYYGPLLFMYV) form a helical membrane-spanning segment. Residues 260 to 270 (HPASPQADDQD) lie on the Extracellular side of the membrane. The helical transmembrane segment at 271–291 (MVESLFYTVIIPFLNPIIYSL) threads the bilayer. Topologically, residues 292–308 (RNKQVIDSLTKTLKGNV) are cytoplasmic.

The protein belongs to the G-protein coupled receptor 1 family.

It localises to the cell membrane. In terms of biological role, odorant receptor. The chain is Olfactory receptor 5H8 from Homo sapiens (Human).